The primary structure comprises 374 residues: Calcium/calmodulin-dependent protein kinase type 1 (374 aa).

A Protein kinase domain is found at 20–276; sequence YDFRDVLGTG…CEQALQHPWI (257 aa). ATP is bound by residues 26–34 and lysine 49; that span reads LGTGAFSEV. Residue lysine 59 forms a Glycyl lysine isopeptide (Lys-Gly) (interchain with G-Cter in ubiquitin) linkage. Residue aspartate 141 is the Proton acceptor of the active site. Residue threonine 177 is modified to Phosphothreonine; by CaMKK1 and CaMKK2. The Involved in nuclear import motif lies at 263-264; it reads KR. The interval 276 to 316 is autoinhibitory domain; it reads IAGDTALDKNIHQSVSEQIKKNFAKSKWKQAFNATAVVRHM. Residues 296–317 form a calmodulin-binding region; it reads KNFAKSKWKQAFNATAVVRHMR. The Nuclear export signal motif lies at 315–321; that stretch reads HMRKLQL.

The protein belongs to the protein kinase superfamily. CAMK Ser/Thr protein kinase family. CaMK subfamily. As to quaternary structure, monomer. Interacts with XPO1. Phosphorylated by CaMKK1 and CaMKK2 on Thr-177. Post-translationally, polybiquitinated by the E3 ubiquitin-protein ligase complex SCF(FBXL12), leading to proteasomal degradation. Widely expressed.

The protein localises to the cytoplasm. The protein resides in the nucleus. It catalyses the reaction L-seryl-[protein] + ATP = O-phospho-L-seryl-[protein] + ADP + H(+). The catalysed reaction is L-threonyl-[protein] + ATP = O-phospho-L-threonyl-[protein] + ADP + H(+). Its activity is regulated as follows. Activated by Ca(2+)/calmodulin. Binding of calmodulin results in conformational change that relieves intrasteric autoinhibition and allows phosphorylation of Thr-177 within the activation loop by CaMKK1 or CaMKK2. Phosphorylation of Thr-177 results in several fold increase in total activity. Unlike CaMK4, is unable to exhibit autonomous activity after Ca(2+)/calmodulin activation. Functionally, calcium/calmodulin-dependent protein kinase that operates in the calcium-triggered CaMKK-CaMK1 signaling cascade and, upon calcium influx, regulates transcription activators activity, cell cycle, hormone production, cell differentiation, actin filament organization and neurite outgrowth. Recognizes the substrate consensus sequence [MVLIF]-x-R-x(2)-[ST]-x(3)-[MVLIF]. Regulates axonal extension and growth cone motility in hippocampal and cerebellar nerve cells. Upon NMDA receptor-mediated Ca(2+) elevation, promotes dendritic growth in hippocampal neurons and is essential in synapses for full long-term potentiation (LTP) and ERK2-dependent translational activation. Downstream of NMDA receptors, promotes the formation of spines and synapses in hippocampal neurons by phosphorylating ARHGEF7/BETAPIX on 'Ser-516', which results in the enhancement of ARHGEF7 activity and activation of RAC1. Promotes neuronal differentiation and neurite outgrowth by activation and phosphorylation of MARK2 on 'Ser-91', 'Ser-92', 'Ser-93' and 'Ser-294'. Promotes nuclear export of HDAC5 and binding to 14-3-3 by phosphorylation of 'Ser-259' and 'Ser-498' in the regulation of muscle cell differentiation. Regulates NUMB-mediated endocytosis by phosphorylation of NUMB on 'Ser-275' and 'Ser-294'. Involved in the regulation of basal and estrogen-stimulated migration of medulloblastoma cells through ARHGEF7/BETAPIX phosphorylation. Is required for proper activation of cyclin-D1/CDK4 complex during G1 progression in diploid fibroblasts. Plays a role in K(+) and ANG2-mediated regulation of the aldosterone synthase (CYP11B2) to produce aldosterone in the adrenal cortex. Phosphorylates EIF4G3/eIF4GII. In vitro phosphorylates CREB1, ATF1, CFTR, MYL9 and SYN1/synapsin I. The chain is Calcium/calmodulin-dependent protein kinase type 1 (Camk1) from Rattus norvegicus (Rat).